A 1153-amino-acid polypeptide reads, in one-letter code: MNKPKMAAEKSASRVLMLLSQLERLNEESRVSDNDAIRQVTGKILHLIQTQEKTRKEVGSKGSGGMEIILSSLENTRDLQTTLNILGILNELLTVGGGRRTGLFVSKGGTAILLQLLVSSSKDPPANEELMLHIHSLLVKVGPKDRKFGVKARLNGALNVTLNLAKHNLQNYKLLLPCLQVLRVYSSNSVNAVSLGKSGALEILFEIVGPFSKKSTTLLKVALDTLAALLKSGMNARRAVDRGYLPTLLAIYQDWHRNDTRHRHVIIRKSILGCIKNITNIKLGRKAFIEASGMRILYNTSTECLPVRTLDPLVNTSSLIMRKCFPKNRLPLPTIKSVFLYPLPHIPAGGPVAQLYNQPPGVDDVVDESDENEATEVDTENDTENEEDDTGHKTQNDDIETDINKLRPKQMNTRPFEELRVYEHFCREFTETFQDIDFEDSISAIPPSRVNSELHRPIIIPTTQSSPGLQNRRPLRESALPLKPEQSPLELDSISIAKRPDGRADADLVCSLGHLILDAAVNGGSVDGCQDDGGEQSVLEVPDTAALLPLHDPELYLEMVKSTRSVPGYTEVAYPDYFGHVALNLREPILERVYGVQRTKIFQDIERLIHSSDILDKVVYDLDNQSSPLTDNGESLKFNSKFESGNLRKAIQVRKFEYDLILNSDINSNHYHQWFYFEVGNMRPGVRYRFNIINCEKSNSQFNYGMQVIMYSVQEAINGSPHWVRTGSDICYYKNHFARSSIAAGGQKGKSYFTMTFTVTFQHKDDVCYFAYHYPYTYSMLKMHLQKLSALCTPEIYYRQEDLCETLGGNGCPLLTITAMPESSSDEHISQFRSRPVIFLSARVHPGETNSSWVMKGSLEFLMSCSPQAQSLRQSYIFKIMPMLNPDGVINGNHRCSLSGEDLNRQWQNPNAELHPTIYHAKSLLQYLRATGRTPLVFCDYHGHSRKKNVFMYGCSIKETMWQSSVNTSTCDLNEDLGYRTLPKLLSQMAPAFSLSSCSFVVERSKEATARVVVWREIGVQRSYTMESTLCGCDQGKYKGLQIGTSELEEMGSQFCLALLRLRRFTSPLELHNHNSHLLDMENELIDTRHIPNITSPTTYVLDEDEPAFLEEVDYSAESNDENDPELEPDLRDNHALPDPSSDSELSHQDSLT.

Residues 357–400 (NQPPGVDDVVDESDENEATEVDTENDTENEEDDTGHKTQNDDIE) are disordered. Acidic residues predominate over residues 364 to 389 (DVVDESDENEATEVDTENDTENEEDD). The Peptidase M14 domain maps to 774-1063 (YPYTYSMLKM…QFCLALLRLR (290 aa)). 3 residues coordinate Zn(2+): His-845, Glu-848, and His-942. The active-site Proton donor/acceptor is the Glu-1027. Positions 1108–1128 (AFLEEVDYSAESNDENDPELE) are enriched in acidic residues. The interval 1108–1153 (AFLEEVDYSAESNDENDPELEPDLRDNHALPDPSSDSELSHQDSLT) is disordered. Positions 1141 to 1153 (SSDSELSHQDSLT) are enriched in polar residues.

This sequence belongs to the peptidase M14 family. Zn(2+) is required as a cofactor.

The protein localises to the cytoplasm. It is found in the cytosol. It localises to the nucleus. Its subcellular location is the mitochondrion. It catalyses the reaction (L-glutamyl)(n+1)-gamma-L-glutamyl-L-glutamyl-[protein] + H2O = (L-glutamyl)(n)-gamma-L-glutamyl-L-glutamyl-[protein] + L-glutamate. It carries out the reaction C-terminal L-alpha-aminoacyl-L-glutamyl-L-glutamyl-[tubulin] + H2O = C-terminal L-alpha-aminoacyl-L-glutamyl-[tubulin] + L-glutamate. Its function is as follows. Metallocarboxypeptidase that mediates protein deglutamylation of tubulin and non-tubulin target proteins. Catalyzes the removal of polyglutamate side chains present on the gamma-carboxyl group of glutamate residues within the C-terminal tail of alpha- and beta-tubulin. Specifically cleaves tubulin long-side-chains, while it is not able to remove the branching point glutamate. Also catalyzes the removal of polyglutamate residues from the carboxy-terminus of alpha-tubulin as well as non-tubulin proteins. The sequence is that of Cytosolic carboxypeptidase 1 (agtpbp1) from Danio rerio (Zebrafish).